We begin with the raw amino-acid sequence, 546 residues long: Chaperonin GroEL 5 (546 aa).

Residues Thr30–Pro33, Lys51, Asp87–Thr91, Gly415, and Asp495 each bind ATP.

This sequence belongs to the chaperonin (HSP60) family. As to quaternary structure, forms a cylinder of 14 subunits composed of two heptameric rings stacked back-to-back. Interacts with the co-chaperonin GroES.

The protein localises to the cytoplasm. The enzyme catalyses ATP + H2O + a folded polypeptide = ADP + phosphate + an unfolded polypeptide.. In terms of biological role, together with its co-chaperonin GroES, plays an essential role in assisting protein folding. The GroEL-GroES system forms a nano-cage that allows encapsulation of the non-native substrate proteins and provides a physical environment optimized to promote and accelerate protein folding. In Paraburkholderia xenovorans (strain LB400), this protein is Chaperonin GroEL 5.